Consider the following 215-residue polypeptide: Uracil phosphoribosyltransferase (215 aa).

Residues Arg77, Arg102, and 129–137 (DPMLATGGS) each bind 5-phospho-alpha-D-ribose 1-diphosphate. Residues Ile193 and 198–200 (GDA) each bind uracil. Asp199 lines the 5-phospho-alpha-D-ribose 1-diphosphate pocket.

The protein belongs to the UPRTase family. The cofactor is Mg(2+).

It catalyses the reaction UMP + diphosphate = 5-phospho-alpha-D-ribose 1-diphosphate + uracil. It participates in pyrimidine metabolism; UMP biosynthesis via salvage pathway; UMP from uracil: step 1/1. Its activity is regulated as follows. Allosterically activated by GTP. Functionally, catalyzes the conversion of uracil and 5-phospho-alpha-D-ribose 1-diphosphate (PRPP) to UMP and diphosphate. In Corynebacterium urealyticum (strain ATCC 43042 / DSM 7109), this protein is Uracil phosphoribosyltransferase.